Here is a 561-residue protein sequence, read N- to C-terminus: Dihydroxy-acid dehydratase (561 aa).

Cys50 provides a ligand contact to [2Fe-2S] cluster. Residue Asp82 coordinates Mg(2+). Cys123 is a [2Fe-2S] cluster binding site. Residues Asp124 and Lys125 each coordinate Mg(2+). An N6-carboxylysine modification is found at Lys125. Cys195 is a binding site for [2Fe-2S] cluster. Glu447 is a binding site for Mg(2+). The Proton acceptor role is filled by Ser473.

This sequence belongs to the IlvD/Edd family. Homodimer. Requires [2Fe-2S] cluster as cofactor. Mg(2+) is required as a cofactor.

The catalysed reaction is (2R)-2,3-dihydroxy-3-methylbutanoate = 3-methyl-2-oxobutanoate + H2O. It carries out the reaction (2R,3R)-2,3-dihydroxy-3-methylpentanoate = (S)-3-methyl-2-oxopentanoate + H2O. The protein operates within amino-acid biosynthesis; L-isoleucine biosynthesis; L-isoleucine from 2-oxobutanoate: step 3/4. Its pathway is amino-acid biosynthesis; L-valine biosynthesis; L-valine from pyruvate: step 3/4. Functions in the biosynthesis of branched-chain amino acids. Catalyzes the dehydration of (2R,3R)-2,3-dihydroxy-3-methylpentanoate (2,3-dihydroxy-3-methylvalerate) into 2-oxo-3-methylpentanoate (2-oxo-3-methylvalerate) and of (2R)-2,3-dihydroxy-3-methylbutanoate (2,3-dihydroxyisovalerate) into 2-oxo-3-methylbutanoate (2-oxoisovalerate), the penultimate precursor to L-isoleucine and L-valine, respectively. The protein is Dihydroxy-acid dehydratase of Acaryochloris marina (strain MBIC 11017).